A 173-amino-acid polypeptide reads, in one-letter code: Cytochrome c-type biogenesis protein CcmE (173 aa).

Residues 1–8 are Cytoplasmic-facing; sequence MNPRRKSR. The chain crosses the membrane as a helical; Signal-anchor for type II membrane protein span at residues 9–29; it reads FKLVIFVVLGIAIASGLMLYA. The Periplasmic portion of the chain corresponds to 30-173; sequence LRQNIDLFYT…RDRQEKEGAK (144 aa). H131 and Y135 together coordinate heme. The disordered stretch occupies residues 152 to 173; that stretch reads GIEAADLKGESARDRQEKEGAK. Basic and acidic residues predominate over residues 156-173; it reads ADLKGESARDRQEKEGAK.

It belongs to the CcmE/CycJ family.

Its subcellular location is the cell inner membrane. In terms of biological role, heme chaperone required for the biogenesis of c-type cytochromes. Transiently binds heme delivered by CcmC and transfers the heme to apo-cytochromes in a process facilitated by CcmF and CcmH. This Haemophilus influenzae (strain ATCC 51907 / DSM 11121 / KW20 / Rd) protein is Cytochrome c-type biogenesis protein CcmE.